We begin with the raw amino-acid sequence, 191 residues long: Pentapeptide repeat protein MfpA (191 aa).

In terms of domain architecture, Pentapeptide repeat spans 115–154 (CRLREVSLVGADLRKAVLRRADLTGSRVQDARLEEADLRG).

This sequence belongs to the pentapeptide repeat protein family. As to quaternary structure, homodimer. Probably interacts with DNA gyrase.

Its function is as follows. When present on multicopy plasmids confers increased resistance to fluoroquinolone antibiotics such as ciprofloxacin and sparfloxacin but not the quinolone nalidixic acid. Forms a structure that exhibits size, shape and electrostatic similarity to B-form DNA; it may bind to DNA gyrase which is postulated to protect it from fluoroquinolones. The polypeptide is Pentapeptide repeat protein MfpA (Mycolicibacterium smegmatis (strain ATCC 700084 / mc(2)155) (Mycobacterium smegmatis)).